A 272-amino-acid chain; its full sequence is 4-hydroxy-tetrahydrodipicolinate reductase (272 aa).

10–15 (GAAGRM) is a binding site for NAD(+). Residue R37 coordinates NADP(+). NAD(+) is bound by residues 100-102 (GTT) and 124-127 (SGNM). H157 functions as the Proton donor/acceptor in the catalytic mechanism. (S)-2,3,4,5-tetrahydrodipicolinate is bound at residue H158. The Proton donor role is filled by K161. 167-168 (GT) is a (S)-2,3,4,5-tetrahydrodipicolinate binding site.

This sequence belongs to the DapB family.

The protein localises to the cytoplasm. The catalysed reaction is (S)-2,3,4,5-tetrahydrodipicolinate + NAD(+) + H2O = (2S,4S)-4-hydroxy-2,3,4,5-tetrahydrodipicolinate + NADH + H(+). The enzyme catalyses (S)-2,3,4,5-tetrahydrodipicolinate + NADP(+) + H2O = (2S,4S)-4-hydroxy-2,3,4,5-tetrahydrodipicolinate + NADPH + H(+). The protein operates within amino-acid biosynthesis; L-lysine biosynthesis via DAP pathway; (S)-tetrahydrodipicolinate from L-aspartate: step 4/4. Catalyzes the conversion of 4-hydroxy-tetrahydrodipicolinate (HTPA) to tetrahydrodipicolinate. The protein is 4-hydroxy-tetrahydrodipicolinate reductase of Methylocella silvestris (strain DSM 15510 / CIP 108128 / LMG 27833 / NCIMB 13906 / BL2).